A 339-amino-acid chain; its full sequence is tRNA N6-adenosine threonylcarbamoyltransferase (339 aa).

The Fe cation site is built by H111 and H115. Substrate contacts are provided by residues 134–138, D167, G180, and N279; that span reads VVSGG. D307 is a Fe cation binding site.

The protein belongs to the KAE1 / TsaD family. Fe(2+) serves as cofactor.

The protein localises to the cytoplasm. The enzyme catalyses L-threonylcarbamoyladenylate + adenosine(37) in tRNA = N(6)-L-threonylcarbamoyladenosine(37) in tRNA + AMP + H(+). Functionally, required for the formation of a threonylcarbamoyl group on adenosine at position 37 (t(6)A37) in tRNAs that read codons beginning with adenine. Is involved in the transfer of the threonylcarbamoyl moiety of threonylcarbamoyl-AMP (TC-AMP) to the N6 group of A37, together with TsaE and TsaB. TsaD likely plays a direct catalytic role in this reaction. This is tRNA N6-adenosine threonylcarbamoyltransferase from Syntrophobacter fumaroxidans (strain DSM 10017 / MPOB).